Here is a 107-residue protein sequence, read N- to C-terminus: RNA polymerase II transcriptional coactivator KIWI (107 aa).

The segment at 1 to 40 is disordered; the sequence is MSSRGKRKDEDVRASDDESETHAPAKKVAKPADDSDQSDD. Basic and acidic residues predominate over residues 7–23; it reads RKDEDVRASDDESETHA.

It belongs to the transcriptional coactivator PC4 family.

The protein resides in the nucleus. In terms of biological role, general coactivator that functions cooperatively with TAFs and mediates functional interactions between upstream activators and the general transcriptional machinery. Binds single-stranded DNA. The sequence is that of RNA polymerase II transcriptional coactivator KIWI (KIWI) from Arabidopsis thaliana (Mouse-ear cress).